An 89-amino-acid chain; its full sequence is Small ribosomal subunit protein uS15 (89 aa).

It belongs to the universal ribosomal protein uS15 family. In terms of assembly, part of the 30S ribosomal subunit. Forms a bridge to the 50S subunit in the 70S ribosome, contacting the 23S rRNA.

Its function is as follows. One of the primary rRNA binding proteins, it binds directly to 16S rRNA where it helps nucleate assembly of the platform of the 30S subunit by binding and bridging several RNA helices of the 16S rRNA. Forms an intersubunit bridge (bridge B4) with the 23S rRNA of the 50S subunit in the ribosome. This chain is Small ribosomal subunit protein uS15, found in Oleidesulfovibrio alaskensis (strain ATCC BAA-1058 / DSM 17464 / G20) (Desulfovibrio alaskensis).